Reading from the N-terminus, the 258-residue chain is uncharacterized protein (258 aa).

The first 23 residues, 1–23 (MVWCHYILLVLTFFLFTTFFTAA), serve as a signal peptide directing secretion. Topologically, residues 24–64 (CPAIFTWLNSLFRLSNDSPHVVHTSIAEVGDIEDGRVDKDG) are cytoplasmic. Residues 65 to 85 (VLFVDLEFFLGCLPFFFFALV) form a helical membrane-spanning segment. Topologically, residues 86–123 (DQSSSSSVCKPLSPSDAKRSSNSLLRLSLVSSNDSDSS) are extracellular. A glycan (N-linked (GlcNAc...) asparagine) is linked at Asn-118. Residues 124–144 (VSVSTFAFFFFFLFFLFFVFT) traverse the membrane as a helical segment. Topologically, residues 145-230 (CTFSSELTSS…SSSISFRISS (86 aa)) are cytoplasmic. Residues 231–251 (IFFLCSLVFMWFFNCFSDLNV) traverse the membrane as a helical segment. The Extracellular segment spans residues 252 to 258 (LLQIKHS).

The protein resides in the membrane. This is an uncharacterized protein from Saccharomyces cerevisiae (strain ATCC 204508 / S288c) (Baker's yeast).